The following is a 153-amino-acid chain: Ribosomal RNA large subunit methyltransferase H (153 aa).

S-adenosyl-L-methionine-binding residues include Leu-71 and Gly-102.

It belongs to the RNA methyltransferase RlmH family. Homodimer.

It is found in the cytoplasm. The catalysed reaction is pseudouridine(1915) in 23S rRNA + S-adenosyl-L-methionine = N(3)-methylpseudouridine(1915) in 23S rRNA + S-adenosyl-L-homocysteine + H(+). In terms of biological role, specifically methylates the pseudouridine at position 1915 (m3Psi1915) in 23S rRNA. The polypeptide is Ribosomal RNA large subunit methyltransferase H (Anaeromyxobacter dehalogenans (strain 2CP-1 / ATCC BAA-258)).